Consider the following 240-residue polypeptide: Biosynthetic peptidoglycan transglycosylase (240 aa).

Residues 9-31 (FLNVVKWFAIASVLLVLLFRVVP) form a helical membrane-spanning segment.

This sequence belongs to the glycosyltransferase 51 family.

The protein resides in the cell inner membrane. The enzyme catalyses [GlcNAc-(1-&gt;4)-Mur2Ac(oyl-L-Ala-gamma-D-Glu-L-Lys-D-Ala-D-Ala)](n)-di-trans,octa-cis-undecaprenyl diphosphate + beta-D-GlcNAc-(1-&gt;4)-Mur2Ac(oyl-L-Ala-gamma-D-Glu-L-Lys-D-Ala-D-Ala)-di-trans,octa-cis-undecaprenyl diphosphate = [GlcNAc-(1-&gt;4)-Mur2Ac(oyl-L-Ala-gamma-D-Glu-L-Lys-D-Ala-D-Ala)](n+1)-di-trans,octa-cis-undecaprenyl diphosphate + di-trans,octa-cis-undecaprenyl diphosphate + H(+). Its pathway is cell wall biogenesis; peptidoglycan biosynthesis. Peptidoglycan polymerase that catalyzes glycan chain elongation from lipid-linked precursors. In Pseudomonas fluorescens (strain SBW25), this protein is Biosynthetic peptidoglycan transglycosylase.